Reading from the N-terminus, the 188-residue chain is Elongation factor P (188 aa).

It belongs to the elongation factor P family.

The protein resides in the cytoplasm. It functions in the pathway protein biosynthesis; polypeptide chain elongation. Involved in peptide bond synthesis. Stimulates efficient translation and peptide-bond synthesis on native or reconstituted 70S ribosomes in vitro. Probably functions indirectly by altering the affinity of the ribosome for aminoacyl-tRNA, thus increasing their reactivity as acceptors for peptidyl transferase. The polypeptide is Elongation factor P (Saccharopolyspora erythraea (strain ATCC 11635 / DSM 40517 / JCM 4748 / NBRC 13426 / NCIMB 8594 / NRRL 2338)).